We begin with the raw amino-acid sequence, 440 residues long: RNA polymerase II C-terminal domain phosphatase-like 4 (440 aa).

Residues methionine 1–proline 36 show a composition bias toward low complexity. The tract at residues methionine 1 to glycine 49 is disordered. Acidic residues predominate over residues serine 37–glutamate 47. The 175-residue stretch at glutamine 118–leucine 292 folds into the FCP1 homology domain. A BRCT domain is found at valine 337–leucine 429.

In terms of assembly, interacts with RAP74. Mg(2+) is required as a cofactor. Requires Co(2+) as cofactor. Mn(2+) serves as cofactor.

It is found in the nucleus. It catalyses the reaction O-phospho-L-seryl-[protein] + H2O = L-seryl-[protein] + phosphate. The enzyme catalyses O-phospho-L-threonyl-[protein] + H2O = L-threonyl-[protein] + phosphate. Functionally, processively dephosphorylates 'Ser-2' and/or 'Ser-5' of the heptad repeats YSPTSPS in the C-terminal domain of the largest RNA polymerase II subunit (RPB1). This promotes the activity of RNA polymerase II. Required for normal plant growth. In Arabidopsis thaliana (Mouse-ear cress), this protein is RNA polymerase II C-terminal domain phosphatase-like 4 (CPL4).